The primary structure comprises 236 residues: MPISVDKAVIARLKIQGETFEILVDPYLARDFKEGKNVPIEEILATPYVFKDAHKGDKASEKEMEKIFGTSDPYEVAKIILKKGEVQLTAQQRREMLEEKKRQIATIIHKHAVDPRTGYPHPVDRILRAMEEVGVRVDIFKDAEAQVQDVIKALRRVLPLRIEMKVIAVKIPGEYVGRSYGEVRKFGRIKKEEWGSDGSWMFLIEIPGGVEEEFYEKLNALTKGNAQTKLIERKGL.

The protein belongs to the SDO1/SBDS family.

This is Ribosome maturation protein SDO1 homolog from Pyrococcus horikoshii (strain ATCC 700860 / DSM 12428 / JCM 9974 / NBRC 100139 / OT-3).